We begin with the raw amino-acid sequence, 178 residues long: Hypoxanthine phosphoribosyltransferase (178 aa).

Diphosphate-binding residues include arginine 43 and glycine 44. GMP is bound at residue glutamate 99. Glutamate 99 lines the IMP pocket. 2 residues coordinate Mg(2+): glutamate 99 and aspartate 100. Aspartate 103 functions as the Proton acceptor in the catalytic mechanism. GMP is bound by residues 103–108 (DSGNTL), lysine 131, and aspartate 159. IMP is bound by residues 103–108 (DSGNTL) and lysine 131. Arginine 165 is a binding site for diphosphate.

Belongs to the purine/pyrimidine phosphoribosyltransferase family. Homotetramer. Requires Mg(2+) as cofactor.

Its subcellular location is the cytoplasm. It carries out the reaction IMP + diphosphate = hypoxanthine + 5-phospho-alpha-D-ribose 1-diphosphate. The catalysed reaction is GMP + diphosphate = guanine + 5-phospho-alpha-D-ribose 1-diphosphate. The protein operates within purine metabolism; IMP biosynthesis via salvage pathway; IMP from hypoxanthine: step 1/1. Purine salvage pathway enzyme which catalyzes the transfer of the ribosyl-5-phosphate group from 5-phospho-alpha-D-ribose 1-diphosphate (PRPP) to the N9 position of hypoxanthine to yield IMP (inosine 5'-monophosphate). To a lesser extent, can also act on guanine leading to GMP, but shows a highly less efficient activity with xanthine. The protein is Hypoxanthine phosphoribosyltransferase (hpt) of Shigella flexneri.